We begin with the raw amino-acid sequence, 454 residues long: Sensor histidine kinase YkoH (454 aa).

At 1–12 (MKLKTKIHLYTS) the chain is on the cytoplasmic side. Residues 13–33 (ISLLILLILVHTAVYLIFSSA) form a helical membrane-spanning segment. Residues 34–153 (LTSKDAARLA…NTEESLFLLK (120 aa)) lie on the Extracellular side of the membrane. The chain crosses the membrane as a helical span at residues 154 to 174 (IILIAASAAVCIASFFAGSLL). At 175-454 (ARRIINPIRR…QFSEQNGGGR (280 aa)) the chain is on the cytoplasmic side. Residues 176–230 (RRIINPIRRLMITMKDIQRDKEFKTISLEGQSNDELYQMGLTFNEMAMMLKEHYD) enclose the HAMP domain. In terms of domain architecture, Histidine kinase spans 238–450 (DASHELKTPL…AVTMQFSEQN (213 aa)). Phosphohistidine; by autocatalysis is present on H241.

Its subcellular location is the cell membrane. It carries out the reaction ATP + protein L-histidine = ADP + protein N-phospho-L-histidine.. Functionally, probable member of the two-component regulatory system YkoH/YkoG. Potentially phosphorylates YkoG. This chain is Sensor histidine kinase YkoH (ykoH), found in Bacillus subtilis (strain 168).